The chain runs to 1382 residues: ATP-dependent RNA helicase TDRD9 (1382 aa).

The tract at residues 36–62 is disordered; the sequence is AAREEVQRQDVAPGAGPAAQAPALAQA. Residues 47–62 show a composition bias toward low complexity; that stretch reads APGAGPAAQAPALAQA. The region spanning 142-308 is the Helicase ATP-binding domain; that stretch reads VSLIESNSVV…FAVPVQNKMN (167 aa). Residue 155–162 coordinates ATP; that stretch reads GATGSGKS. A DEAH box motif is present at residues 254–257; it reads DEVH. Positions 377–544 constitute a Helicase C-terminal domain; sequence SGAQFVLERS…ILKVKLLDMG (168 aa). One can recognise a Tudor domain in the interval 944–1004; it reads HPHPDLVCLA…MEIPCQFLEL (61 aa).

It belongs to the DEAD box helicase family. DEAH subfamily. Interacts with piRNA-associated proteins PIWIL1 and PIWIL4.

It is found in the cytoplasm. The protein localises to the nucleus. It carries out the reaction ATP + H2O = ADP + phosphate + H(+). ATP-binding RNA helicase required during spermatogenesis. Required to repress transposable elements and prevent their mobilization, which is essential for the germline integrity. Acts via the piRNA metabolic process, which mediates the repression of transposable elements during meiosis by forming complexes composed of piRNAs and Piwi proteins and governs the methylation and subsequent repression of transposons. Acts downstream of piRNA biogenesis: exclusively required for transposon silencing in the nucleus, suggesting that it acts as a nuclear effector in the nucleus together with PIWIL4. This Homo sapiens (Human) protein is ATP-dependent RNA helicase TDRD9.